The primary structure comprises 629 residues: 1-deoxy-D-xylulose-5-phosphate synthase (629 aa).

Thiamine diphosphate-binding positions include His79 and 119 to 121; that span reads SHA. Asp150 lines the Mg(2+) pocket. Thiamine diphosphate contacts are provided by residues 151-152, Asn180, Tyr292, and Glu377; that span reads GS. Asn180 lines the Mg(2+) pocket.

It belongs to the transketolase family. DXPS subfamily. In terms of assembly, homodimer. Mg(2+) is required as a cofactor. The cofactor is thiamine diphosphate.

It carries out the reaction D-glyceraldehyde 3-phosphate + pyruvate + H(+) = 1-deoxy-D-xylulose 5-phosphate + CO2. It participates in metabolic intermediate biosynthesis; 1-deoxy-D-xylulose 5-phosphate biosynthesis; 1-deoxy-D-xylulose 5-phosphate from D-glyceraldehyde 3-phosphate and pyruvate: step 1/1. Catalyzes the acyloin condensation reaction between C atoms 2 and 3 of pyruvate and glyceraldehyde 3-phosphate to yield 1-deoxy-D-xylulose-5-phosphate (DXP). This is 1-deoxy-D-xylulose-5-phosphate synthase from Tropheryma whipplei (strain TW08/27) (Whipple's bacillus).